A 288-amino-acid chain; its full sequence is Syntaxin-1A (288 aa).

The Cytoplasmic segment spans residues Met1–Lys265. Phosphoserine is present on residues Ser14, Ser64, and Ser95. A coiled-coil region spans residues Asp68–Ser109. Ser188 bears the Phosphoserine; by DAPK1 mark. A t-SNARE coiled-coil homology domain is found at Leu192 to Ala254. Residues Lys252, Lys253, and Lys256 each participate in a glycyl lysine isopeptide (Lys-Gly) (interchain with G-Cter in SUMO) cross-link. The helical; Anchor for type IV membrane protein transmembrane segment at Ile266–Ile286 threads the bilayer. The Extracellular segment spans residues Phe287–Ala288.

Belongs to the syntaxin family. Part of the SNARE core complex containing SNAP25, VAMP2 and STX1A; this complex constitutes the basic catalytic machinery of the complex neurotransmitter release apparatus. The SNARE complex interacts with CPLX1. Interacts with STXBP1. The interaction with STXBP1 promotes assembly of the SNARE complex. Interacts (via C-terminus) with KCNB1 (via C-terminus); the interaction increases in a calcium-dependent manner and induces a pore-independent enhancement of exocytosis in neuroendocrine cells, chromaffin cells, pancreatic beta cells and from the soma of dorsal root ganglia (DRG) neurons. Interacts with SYTL4. Interacts with STXBP6. Interacts with PLCL1 (via C2 domain). Interacts with OTOF. Interacts with LGI3. Interacts (via the H3 domain) with SLC6A4 (via the N-terminus); this interaction regulates SLC4A6 channel conductance in thalamocortical neurons. Interacts with SYT6 and SYT8; the interaction is Ca(2+)-dependent. Interacts with VAMP8. Interacts with SNAP23. Interacts with VAPA and SYBU. Interacts with PRRT2. Interacts with SEPT8. Interacts with STXBP5L. Interacts with synaptotagmin-1/SYT1. Interacts with SEPTIN5; in the cerebellar cortex. Interacts with SEPTIN4; in the striatum. In terms of processing, phosphorylated by CK2. Phosphorylation at Ser-188 by DAPK1 significantly decreases its interaction with STXBP1. Post-translationally, sumoylated, sumoylation is required for regulation of synaptic vesicle endocytosis. Highly expressed in embryonic spinal cord and ganglia and in adult cerebellum and cerebral cortex. As to expression, expressed in heart, liver, fat, skeletal muscle, kidney and brain.

It localises to the cytoplasmic vesicle. The protein localises to the secretory vesicle. The protein resides in the synaptic vesicle membrane. Its subcellular location is the synapse. It is found in the synaptosome. It localises to the cell membrane. The protein localises to the secreted. Its function is as follows. Plays an essential role in hormone and neurotransmitter calcium-dependent exocytosis and endocytosis. Part of the SNARE (Soluble NSF Attachment Receptor) complex composed of SNAP25, STX1A and VAMP2 which mediates the fusion of synaptic vesicles with the presynaptic plasma membrane. STX1A and SNAP25 are localized on the plasma membrane while VAMP2 resides in synaptic vesicles. The pairing of the three SNAREs from the N-terminal SNARE motifs to the C-terminal anchors leads to the formation of the SNARE complex, which brings membranes into close proximity and results in final fusion. Participates in the calcium-dependent regulation of acrosomal exocytosis in sperm. Also plays an important role in the exocytosis of hormones such as insulin or glucagon-like peptide 1 (GLP-1). This Homo sapiens (Human) protein is Syntaxin-1A (STX1A).